The primary structure comprises 226 residues: Triosephosphate isomerase (226 aa).

10–12 is a binding site for substrate; that stretch reads NFK. His-96 (electrophile) is an active-site residue. Glu-144 acts as the Proton acceptor in catalysis. Residues Ile-149, Gly-184, and 205–206 each bind substrate; that span reads AS.

The protein belongs to the triosephosphate isomerase family. As to quaternary structure, homotetramer; dimer of dimers.

The protein localises to the cytoplasm. The enzyme catalyses D-glyceraldehyde 3-phosphate = dihydroxyacetone phosphate. The protein operates within carbohydrate biosynthesis; gluconeogenesis. It participates in carbohydrate degradation; glycolysis; D-glyceraldehyde 3-phosphate from glycerone phosphate: step 1/1. Involved in the gluconeogenesis. Catalyzes stereospecifically the conversion of dihydroxyacetone phosphate (DHAP) to D-glyceraldehyde-3-phosphate (G3P). The chain is Triosephosphate isomerase from Methanopyrus kandleri (strain AV19 / DSM 6324 / JCM 9639 / NBRC 100938).